The primary structure comprises 396 residues: Enoyl-[acyl-carrier-protein] reductase [NADH] (396 aa).

NAD(+)-binding positions include 47-52 (GASTGF), 73-74 (FE), 110-111 (DA), and 138-139 (LA). Y224 is a binding site for substrate. Y234 acts as the Proton donor in catalysis. Residues K243 and 272-274 (LVT) each bind NAD(+).

This sequence belongs to the TER reductase family. As to quaternary structure, monomer.

The catalysed reaction is a 2,3-saturated acyl-[ACP] + NAD(+) = a (2E)-enoyl-[ACP] + NADH + H(+). Its pathway is lipid metabolism; fatty acid biosynthesis. Functionally, involved in the final reduction of the elongation cycle of fatty acid synthesis (FAS II). Catalyzes the reduction of a carbon-carbon double bond in an enoyl moiety that is covalently linked to an acyl carrier protein (ACP). In Flavobacterium johnsoniae (strain ATCC 17061 / DSM 2064 / JCM 8514 / BCRC 14874 / CCUG 350202 / NBRC 14942 / NCIMB 11054 / UW101) (Cytophaga johnsonae), this protein is Enoyl-[acyl-carrier-protein] reductase [NADH].